We begin with the raw amino-acid sequence, 300 residues long: F-box/LRR-repeat protein 15 (300 aa).

Met-1 carries the post-translational modification N-acetylmethionine. Residues Leu-19 to Asp-66 form the F-box domain. Residues Asn-113–Arg-269 form an interaction with SMURF1 region. 5 LRR repeats span residues Arg-141–Ala-162, Ala-167–Ala-188, Gly-194–Ala-215, Gln-220–Ala-241, and Ala-246–Arg-267.

Belongs to the FBXL15 family. In terms of assembly, part of the SCF (SKP1-CUL1-F-box) E3 ubiquitin-protein ligase complex SCF(FBXL15) composed of CUL1, SKP1, RBX1 and FBXL15.

Its subcellular location is the cytoplasm. The protein operates within protein modification; protein ubiquitination. Its function is as follows. Substrate recognition component of a SCF (SKP1-CUL1-F-box protein) E3 ubiquitin-protein ligase complex which mediates the ubiquitination and subsequent proteasomal degradation of SMURF1, thereby acting as a positive regulator of the BMP signaling pathway. Required for dorsal/ventral pattern formation. Also mediates ubiquitination of SMURF2 and WWP2. Required for bone mass maintenance. The protein is F-box/LRR-repeat protein 15 (Fbxl15) of Rattus norvegicus (Rat).